The primary structure comprises 324 residues: tRNA uridine(34) hydroxylase (324 aa).

The 95-residue stretch at 127–221 folds into the Rhodanese domain; it reads QQEETIVIDA…YGKDPEVQGE (95 aa). The active-site Cysteine persulfide intermediate is the C181.

Belongs to the TrhO family.

It carries out the reaction uridine(34) in tRNA + AH2 + O2 = 5-hydroxyuridine(34) in tRNA + A + H2O. Its function is as follows. Catalyzes oxygen-dependent 5-hydroxyuridine (ho5U) modification at position 34 in tRNAs. The polypeptide is tRNA uridine(34) hydroxylase (Bacillus cytotoxicus (strain DSM 22905 / CIP 110041 / 391-98 / NVH 391-98)).